A 576-amino-acid chain; its full sequence is Interleukin-1 receptor type 1 (576 aa).

The signal sequence occupies residues 1-19; the sequence is MENMKVLLGFICLIVPLLS. Ig-like C2-type domains follow at residues 20–115, 121–217, and 229–331; these read LETD…ITMS, PGLC…RVIT, and PVIM…VRLV. The Extracellular portion of the chain corresponds to 20–338; that stretch reads LETDKCTEYP…RLVYPVPDFK (319 aa). Disulfide bonds link cysteine 25–cysteine 107, cysteine 46–cysteine 99, and cysteine 145–cysteine 199. Asparagine 63 and asparagine 103 each carry an N-linked (GlcNAc...) asparagine glycan. Asparagine 236, asparagine 252, and asparagine 266 each carry an N-linked (GlcNAc...) asparagine glycan. An intrachain disulfide couples cysteine 251 to cysteine 315. Residues 339–359 traverse the membrane as a helical segment; it reads NYLIGGFAIFTATAVFCACIY. The Cytoplasmic portion of the chain corresponds to 360-576; the sequence is KVFKVDIVLW…LQAETHLPLG (217 aa). The 156-residue stretch at 386–541 folds into the TIR domain; the sequence is RTYDAYVLYP…RFWKNLRYQM (156 aa). The active site involves glutamate 473. Tyrosine 499 is modified (phosphotyrosine). Threonine 556 carries the phosphothreonine; by PKC modification.

Belongs to the interleukin-1 receptor family. In terms of assembly, the interleukin-1 receptor complex is a heterodimer of IL1R1 and IL1RAP. Interacts with PIK3R1. Interacts with IL1A. A soluble form (sIL1R1) is probably produced by proteolytic cleavage at the cell surface (shedding). Post-translationally, rapidly phosphorylated on Tyr-499 in response to IL-1, which creates a SH2 binding site for the PI 3-kinase regulatory subunit PIK3R1.

The protein resides in the membrane. It localises to the cell membrane. The protein localises to the secreted. It catalyses the reaction NAD(+) + H2O = ADP-D-ribose + nicotinamide + H(+). Receptor for IL1A, IL1B and IL1RN. After binding to interleukin-1 associates with the coreceptor IL1RAP to form the high affinity interleukin-1 receptor complex which mediates interleukin-1-dependent activation of NF-kappa-B, MAPK and other pathways. Signaling involves the recruitment of adapter molecules such as TOLLIP, MYD88, and IRAK1 or IRAK2 via the respective TIR domains of the receptor/coreceptor subunits. Binds ligands with comparable affinity and binding of antagonist IL1RN prevents association with IL1RAP to form a signaling complex. Involved in IL1B-mediated costimulation of IFNG production from T-helper 1 (Th1) cells. This is Interleukin-1 receptor type 1 (Il1r1) from Rattus norvegicus (Rat).